The primary structure comprises 197 residues: Putative rho GDP-dissociation inhibitor 1 (197 aa).

The protein belongs to the Rho GDI family. In terms of assembly, interacts with rac1A, rac1B, rac1C, racB, raCC and RacE.

The protein localises to the cytoplasm. Functionally, regulates the GDP/GTP exchange reaction of the Rho proteins by inhibiting the dissociation of GDP from them, and the subsequent binding of GTP to them. Regulates the Rac-dependent signaling pathways controlling cytokinesis, actin reorganization and the contractile vacuole. Required for efficient accumulation of cap at the cell cortex. The polypeptide is Putative rho GDP-dissociation inhibitor 1 (rdiA) (Dictyostelium discoideum (Social amoeba)).